We begin with the raw amino-acid sequence, 248 residues long: Adenylate kinase isoenzyme 6 homolog HBR1 (248 aa).

ATP-binding residues include glycine 19, glycine 21, lysine 22, serine 23, and serine 24. The NMPbind stretch occupies residues 49 to 72 (NISEIAKERDCIESYDAKLDTSIV). Positions 124–134 (TRNYNDLKLQE) are LID. Arginine 125 contributes to the ATP binding site. Residues 188 to 248 (DGVSNELNKQ…EMEHTEDIAQ (61 aa)) are disordered. Residues 202-238 (DSSDEGDDNSDSDEYELEEDEQEEEEEREEYDEETNE) are compositionally biased toward acidic residues. The span at 239–248 (EMEHTEDIAQ) shows a compositional bias: basic and acidic residues.

The protein belongs to the adenylate kinase family. AK6 subfamily. Interacts with small ribosomal subunit protein uS11. Not a structural component of 43S pre-ribosomes, but transiently interacts with them by binding to uS11.

The protein resides in the cytoplasm. The protein localises to the nucleus. The enzyme catalyses AMP + ATP = 2 ADP. It catalyses the reaction ATP + H2O = ADP + phosphate + H(+). In terms of biological role, broad-specificity nucleoside monophosphate (NMP) kinase that catalyzes the reversible transfer of the terminal phosphate group between nucleoside triphosphates and monophosphates. Also has ATPase activity. Involved in the late cytoplasmic maturation steps of the 40S ribosomal particles, specifically 18S rRNA maturation. While NMP activity is not required for ribosome maturation, ATPase activity is. Associates transiently with small ribosomal subunit protein uS11. ATP hydrolysis breaks the interaction with uS11. May temporarily remove uS11 from the ribosome to enable a conformational change of the ribosomal RNA that is needed for the final maturation step of the small ribosomal subunit. Its NMP activity may have a role in nuclear energy homeostasis. Induces transcription of mating-type proteins ALPHA1 and ALPHA2 and moderately represses transcription of mating-type protein A1 in response to hemoglobin and growth signals. Involved in the induction of a high affinity fibronectin receptor by sub-inhibitory dosages of caspofungin. This Candida albicans (strain SC5314 / ATCC MYA-2876) (Yeast) protein is Adenylate kinase isoenzyme 6 homolog HBR1 (HBR1).